We begin with the raw amino-acid sequence, 233 residues long: Phycoerythrobilin synthase (233 aa).

Belongs to the HY2 family.

It catalyses the reaction (3Z)-phycoerythrobilin + 2 oxidized 2[4Fe-4S]-[ferredoxin] = biliverdin IXalpha + 2 reduced 2[4Fe-4S]-[ferredoxin] + 4 H(+). Functionally, plays a role in phycoerythrobilin biosynthesis, the red pigment chromophore photosynthetically active biliproteins of the host cyanobacteria. Uses a four-electron reduction to carry out the reactions catalyzed by two enzymes (EC 1.3.7.2 and EC 1.3.7.3) in host. The chain is Phycoerythrobilin synthase (pebS) from Prochlorococcus.